Consider the following 236-residue polypeptide: RNA-binding protein 24 (236 aa).

An RRM domain is found at 11–88 (TKIFVGGLPY…RKANVNLAYL (78 aa)). A necessary for interaction with EIF4E region spans residues 175 to 199 (QYPYAASPAAAGYVTTGGYSYAVQQ).

Interacts with EIF4E; this interaction prevents EIF4E from binding to p53/TP53 mRNA and inhibits the assembly of translation initiation complex. As to expression, expressed strongly in heart and skeletal muscles. Weakly expressed in intestine, aorta, liver, lung, kidney, uterus and bladder.

Its subcellular location is the nucleus. It is found in the cytoplasm. Functionally, multifunctional RNA-binding protein involved in the regulation of pre-mRNA splicing, mRNA stability and mRNA translation important for cell fate decision and differentiation. Plays a major role in pre-mRNA alternative splicing regulation. Mediates preferentially muscle-specific exon inclusion in numerous mRNAs important for striated cardiac and skeletal muscle cell differentiation. Binds to intronic splicing enhancer (ISE) composed of stretches of GU-rich motifs localized in flanking intron of exon that will be included by alternative splicing. Involved in embryonic stem cell (ESC) transition to cardiac cell differentiation by promoting pre-mRNA alternative splicing events of several pluripotency and/or differentiation genes. Plays a role in the regulation of mRNA stability. Binds to 3'-untranslated region (UTR) AU-rich elements in target transcripts, such as CDKN1A and MYOG, leading to maintain their stabilities. Involved in myogenic differentiation by regulating MYOG levels. Binds to multiple regions in the mRNA 3'-UTR of TP63, hence inducing its destabilization. Also promotes the destabilization of the CHRM2 mRNA via its binding to a region in the coding sequence. Plays a role in the regulation of mRNA translation. Mediates repression of p53/TP53 mRNA translation through its binding to U-rich element in the 3'-UTR, hence preventing EIF4E from binding to p53/TP53 mRNA and translation initiation. Binds to a huge amount of mRNAs. Required for embryonic heart development, sarcomer and M-band formation in striated muscles. Together with RBM20, promotes the expression of short isoforms of PDLIM5/ENH in cardiomyocytes. In Mus musculus (Mouse), this protein is RNA-binding protein 24.